Here is a 309-residue protein sequence, read N- to C-terminus: Lipoyl synthase (309 aa).

Positions 56, 61, 67, 82, 86, 89, and 296 each coordinate [4Fe-4S] cluster. Positions 68–285 (FKRGTATFMI…RVAGLKMGFS (218 aa)) constitute a Radical SAM core domain.

This sequence belongs to the radical SAM superfamily. Lipoyl synthase family. The cofactor is [4Fe-4S] cluster.

It localises to the cytoplasm. The catalysed reaction is [[Fe-S] cluster scaffold protein carrying a second [4Fe-4S](2+) cluster] + N(6)-octanoyl-L-lysyl-[protein] + 2 oxidized [2Fe-2S]-[ferredoxin] + 2 S-adenosyl-L-methionine + 4 H(+) = [[Fe-S] cluster scaffold protein] + N(6)-[(R)-dihydrolipoyl]-L-lysyl-[protein] + 4 Fe(3+) + 2 hydrogen sulfide + 2 5'-deoxyadenosine + 2 L-methionine + 2 reduced [2Fe-2S]-[ferredoxin]. It functions in the pathway protein modification; protein lipoylation via endogenous pathway; protein N(6)-(lipoyl)lysine from octanoyl-[acyl-carrier-protein]: step 2/2. In terms of biological role, catalyzes the radical-mediated insertion of two sulfur atoms into the C-6 and C-8 positions of the octanoyl moiety bound to the lipoyl domains of lipoate-dependent enzymes, thereby converting the octanoylated domains into lipoylated derivatives. The chain is Lipoyl synthase from Syntrophotalea carbinolica (strain DSM 2380 / NBRC 103641 / GraBd1) (Pelobacter carbinolicus).